Reading from the N-terminus, the 366-residue chain is Lipase member J (366 aa).

The active-site Nucleophile is the S141. Active-site charge relay system residues include D312 and H341.

This sequence belongs to the AB hydrolase superfamily. Lipase family.

The sequence is that of Lipase member J (LIPJ) from Homo sapiens (Human).